The primary structure comprises 255 residues: 5'-nucleotidase SurE (255 aa).

A divalent metal cation is bound by residues Asp-8, Asp-9, Ser-39, and Asn-91.

It belongs to the SurE nucleotidase family. A divalent metal cation serves as cofactor.

It is found in the cytoplasm. The catalysed reaction is a ribonucleoside 5'-phosphate + H2O = a ribonucleoside + phosphate. Its function is as follows. Nucleotidase that shows phosphatase activity on nucleoside 5'-monophosphates. The protein is 5'-nucleotidase SurE of Acinetobacter baumannii (strain AB0057).